Here is a 202-residue protein sequence, read N- to C-terminus: Imidazoleglycerol-phosphate dehydratase (202 aa).

It belongs to the imidazoleglycerol-phosphate dehydratase family.

It is found in the cytoplasm. It catalyses the reaction D-erythro-1-(imidazol-4-yl)glycerol 3-phosphate = 3-(imidazol-4-yl)-2-oxopropyl phosphate + H2O. It functions in the pathway amino-acid biosynthesis; L-histidine biosynthesis; L-histidine from 5-phospho-alpha-D-ribose 1-diphosphate: step 6/9. This chain is Imidazoleglycerol-phosphate dehydratase, found in Rhizobium etli (strain ATCC 51251 / DSM 11541 / JCM 21823 / NBRC 15573 / CFN 42).